A 493-amino-acid chain; its full sequence is Ferruginol synthase 1 (493 aa).

A helical transmembrane segment spans residues 2–22; sequence DSFPLLAALFFILAATWFISF. Cys-437 contributes to the heme binding site.

This sequence belongs to the cytochrome P450 family. Heme serves as cofactor. Expressed in leaf glandular trichomes.

The protein resides in the membrane. It carries out the reaction abieta-8,11,13-triene + reduced [NADPH--hemoprotein reductase] + O2 = ferruginol + oxidized [NADPH--hemoprotein reductase] + H2O + H(+). It catalyses the reaction ferruginol + reduced [NADPH--hemoprotein reductase] + O2 = 11-hydroxyferruginol + oxidized [NADPH--hemoprotein reductase] + H2O + H(+). The catalysed reaction is miltiradiene + 2 reduced [NADPH--hemoprotein reductase] + 2 O2 = 11-oxomiltiradiene + 2 oxidized [NADPH--hemoprotein reductase] + 3 H2O + 2 H(+). Its pathway is secondary metabolite biosynthesis; terpenoid biosynthesis. Monooxygenase involved in the biosynthesis of labdane-related diterpenes natural products. Catalyzes the oxidation of abietatriene to produce ferruginol. Catalyzes the oxidation of ferruginol at C-12 to produce 11-hydroxyferruginol. Ferruginol and 11-hydroxyferruginol are intermediates in the biosynthesis of carnosate, a potent antioxidant. May also convert miltiradiene into 11-oxomiltiradiene. In Rosmarinus officinalis (Rosemary), this protein is Ferruginol synthase 1.